A 65-amino-acid polypeptide reads, in one-letter code: Ferredoxin soy (65 aa).

In terms of domain architecture, 4Fe-4S ferredoxin-type spans 2-29; that stretch reads GVQVDKERCVGAGMCALTAPDVFTQDDD. [3Fe-4S] cluster is bound by residues cysteine 10, cysteine 16, and cysteine 55.

Requires [3Fe-4S] cluster as cofactor.

In terms of biological role, electron transport protein for the cytochrome P-450-SOY system. The sequence is that of Ferredoxin soy (soyB) from Streptomyces griseus.